The sequence spans 66 residues: Large ribosomal subunit protein bL33c (66 aa).

This sequence belongs to the bacterial ribosomal protein bL33 family.

It localises to the plastid. Its subcellular location is the chloroplast. This is Large ribosomal subunit protein bL33c from Solanum bulbocastanum (Wild potato).